The following is a 1129-amino-acid chain: Phospholipid-transporting ATPase 11C (1129 aa).

The Cytoplasmic segment spans residues 1 to 83 (MFRRTLNRLC…IIFLVQVTVD (83 aa)). Residues 84 to 104 (TPTSPVTSGLPLFFVITVTAI) traverse the membrane as a helical segment. Over 105 to 287 (KQGYEDWLRH…SQKCSAVEKS (183 aa)) the chain is Extracellular. Residues 288–308 (INAFLIVYLFILLTKAAVCTT) traverse the membrane as a helical segment. Residues 309-343 (LKYVWQSSPYNDEPWYNQKTQKERETFQVLKMFTD) are Cytoplasmic-facing. A helical membrane pass occupies residues 344–364 (FLSFMVLFNFIIPVSMYVTVE). The Extracellular portion of the chain corresponds to 365-876 (MQKFLGSFFI…YVRIAHLVQY (512 aa)). D409 (4-aspartylphosphate intermediate) is an active-site residue. ATP-binding residues include D409, K410, and T411. D409 serves as a coordination point for Mg(2+). Residue T411 coordinates Mg(2+). At S442 the chain carries Phosphoserine. ATP is bound by residues E498, F540, K563, and R594. Residues 607–643 (DFERINAQLVEAKMALQDREEKLEKVFDEIETNMNLI) are a coiled coil. The ATP site is built by T674, G675, and D676. The stretch at 695 to 726 (TELLELTTKTIEESERKEDRLHELLIEYRKKL) forms a coiled coil. The ATP site is built by R789 and K795. D816 serves as a coordination point for Mg(2+). ATP contacts are provided by N819 and D820. Position 820 (D820) interacts with Mg(2+). Residues 877 to 897 (FFYKNLCFILPQFLYQFFCGF) form a helical membrane-spanning segment. Over 898-905 (SQQPLYDA) the chain is Cytoplasmic. A helical transmembrane segment spans residues 906 to 926 (AYLTMYNICFTSLPILAYSLL). Residues 927–952 (EQHINIDTLTADPRLYMKITGNAMLQ) lie on the Extracellular side of the membrane. Residues 953–973 (LGPFLHWTFLAAFEGTVFFFG) form a helical membrane-spanning segment. Over 974-988 (TYFLFQTSSLEDNGK) the chain is Cytoplasmic. A helical transmembrane segment spans residues 989-1009 (IYGNWTFGTIVFTVLVFTVTL). The Extracellular segment spans residues 1010 to 1023 (KLALDTRFWTWINH). Residues 1024–1044 (FVIWGSLAFYVFFSFFWGGII) traverse the membrane as a helical segment. The Cytoplasmic portion of the chain corresponds to 1045–1066 (WPFLKQQRMYFVFAQMLCSVST). Residues 1067-1087 (WLAIILLIFISLFPEILLIVV) form a helical membrane-spanning segment. Residues 1088–1129 (KNVRRRSARRNLSCRRASDSLSARPSVRPLLLRTFSDESNIL) lie on the Extracellular side of the membrane. Residues S1105, S1113, and S1123 each carry the phosphoserine modification. The Di-leucine motif motif lies at 1113-1118 (SVRPLL).

It belongs to the cation transport ATPase (P-type) (TC 3.A.3) family. Type IV subfamily. Component of a P4-ATPase flippase complex which consists of a catalytic alpha subunit ATP11C and an accessory beta subunit TMEM30A. It depends on Mg(2+) as a cofactor. Proteolytically cleaved by CASP3, CASP6 and CASP7. In terms of processing, phosphorylated at Ser-1113 likely by PRKCA; this creates a functional di-leucine motif that is sufficient for endocytosis. As to expression, widely expressed. Expressed in retina, brain, liver and testes (at protein level). Expressed in lung, bone marrow, lymph nodes, prostate, ovary and uterus. Expressed in fetus.

It localises to the cell membrane. The protein resides in the endoplasmic reticulum membrane. The protein localises to the early endosome membrane. Its subcellular location is the recycling endosome membrane. The enzyme catalyses ATP + H2O + phospholipidSide 1 = ADP + phosphate + phospholipidSide 2.. It carries out the reaction a 1,2-diacyl-sn-glycero-3-phospho-L-serine(out) + ATP + H2O = a 1,2-diacyl-sn-glycero-3-phospho-L-serine(in) + ADP + phosphate + H(+). It catalyses the reaction a 1,2-diacyl-sn-glycero-3-phosphoethanolamine(out) + ATP + H2O = a 1,2-diacyl-sn-glycero-3-phosphoethanolamine(in) + ADP + phosphate + H(+). Catalytic component of a P4-ATPase flippase complex which catalyzes the hydrolysis of ATP coupled to the transport of aminophospholipids, phosphatidylserines (PS) and phosphatidylethanolamines (PE), from the outer to the inner leaflet of the plasma membrane. Major PS-flippase in immune cell subsets. In erythrocyte plasma membrane, it is required to maintain PS in the inner leaflet preventing its exposure on the surface. This asymmetric distribution is critical for the survival of erythrocytes in circulation since externalized PS is a phagocytic signal for erythrocyte clearance by splenic macrophages. Required for B cell differentiation past the pro-B cell stage. Seems to mediate PS flipping in pro-B cells. May be involved in the transport of cholestatic bile acids. This Mus musculus (Mouse) protein is Phospholipid-transporting ATPase 11C.